A 194-amino-acid polypeptide reads, in one-letter code: Glycerol-3-phosphate acyltransferase (194 aa).

The next 6 helical transmembrane spans lie at 2-22 (AFFC…GVWI), 52-72 (LGVA…YIAS), 80-100 (DLVI…FISF), 112-132 (VFLF…ILVA), 137-157 (YVSL…FFTH), and 161-181 (YLFA…KTNI).

Belongs to the PlsY family. As to quaternary structure, probably interacts with PlsX.

The protein resides in the cell inner membrane. The catalysed reaction is an acyl phosphate + sn-glycerol 3-phosphate = a 1-acyl-sn-glycero-3-phosphate + phosphate. Its pathway is lipid metabolism; phospholipid metabolism. Its function is as follows. Catalyzes the transfer of an acyl group from acyl-phosphate (acyl-PO(4)) to glycerol-3-phosphate (G3P) to form lysophosphatidic acid (LPA). This enzyme utilizes acyl-phosphate as fatty acyl donor, but not acyl-CoA or acyl-ACP. This is Glycerol-3-phosphate acyltransferase from Fusobacterium nucleatum subsp. nucleatum (strain ATCC 25586 / DSM 15643 / BCRC 10681 / CIP 101130 / JCM 8532 / KCTC 2640 / LMG 13131 / VPI 4355).